The primary structure comprises 485 residues: Probable outer membrane usher protein LpfC' (485 aa).

It belongs to the fimbrial export usher family.

It is found in the cell outer membrane. Functionally, part of the lpfABCC'DE fimbrial operon. LP fimbriae may participate in the interaction with eukaryotic cells by assisting in microcolony formation. Could be involved in the export and assembly of the fimbrial subunits across the outer membrane. The polypeptide is Probable outer membrane usher protein LpfC' (lpfC') (Escherichia coli O157:H7).